A 431-amino-acid polypeptide reads, in one-letter code: Enolase (431 aa).

Gln-166 is a binding site for (2R)-2-phosphoglycerate. Glu-208 serves as the catalytic Proton donor. Positions 245, 289, and 316 each coordinate Mg(2+). (2R)-2-phosphoglycerate is bound by residues Lys-341, Arg-370, Ser-371, and Lys-392. Residue Lys-341 is the Proton acceptor of the active site.

It belongs to the enolase family. Mg(2+) is required as a cofactor.

Its subcellular location is the cytoplasm. The protein resides in the secreted. The protein localises to the cell surface. It catalyses the reaction (2R)-2-phosphoglycerate = phosphoenolpyruvate + H2O. Its pathway is carbohydrate degradation; glycolysis; pyruvate from D-glyceraldehyde 3-phosphate: step 4/5. Its function is as follows. Catalyzes the reversible conversion of 2-phosphoglycerate (2-PG) into phosphoenolpyruvate (PEP). It is essential for the degradation of carbohydrates via glycolysis. This is Enolase from Ruminiclostridium cellulolyticum (strain ATCC 35319 / DSM 5812 / JCM 6584 / H10) (Clostridium cellulolyticum).